Consider the following 468-residue polypeptide: UDP-N-acetylmuramoyl-L-alanine--L-glutamate ligase (468 aa).

Gly122–Thr128 serves as a coordination point for ATP.

It belongs to the MurCDEF family. MurD2 subfamily.

It localises to the cytoplasm. The catalysed reaction is UDP-N-acetyl-alpha-D-muramoyl-L-alanine + L-glutamate + ATP = UDP-N-acetyl-alpha-D-muramoyl-L-alanyl-L-glutamate + ADP + phosphate + H(+). It functions in the pathway cell wall biogenesis; peptidoglycan biosynthesis. In terms of biological role, cell wall formation. Catalyzes the addition of L-glutamate to the nucleotide precursor UDP-N-acetylmuramoyl-L-alanine. This Xanthomonas campestris pv. campestris (strain 8004) protein is UDP-N-acetylmuramoyl-L-alanine--L-glutamate ligase.